The primary structure comprises 120 residues: MTRIKRGSIARARRTKIRFFASKFRGSHSRLTRTIIQQGLRAFVSSQRDRHKKKRDFRRLWITRLNAAIRAIGVGYSYSASIHNLYKSQLILNRKILTQIAISNRNCLYMISNEILKSGV.

It belongs to the bacterial ribosomal protein bL20 family.

The protein resides in the plastid. Binds directly to 23S ribosomal RNA and is necessary for the in vitro assembly process of the 50S ribosomal subunit. It is not involved in the protein synthesizing functions of that subunit. The polypeptide is Large ribosomal subunit protein bL20c (rpl20) (Cuscuta gronovii (Common dodder)).